A 478-amino-acid chain; its full sequence is Quinoprotein glucose dehydrogenase B (478 aa).

Residues 1–24 form the signal peptide; the sequence is MNKHLLAKIALLSAVQLVTLSAFA. The D-glucose site is built by Gln100 and Asp167. The active-site Proton acceptor is His168. D-glucose-binding residues include Gln192 and Arg252. Residues 252–253 form a PQQ region; the sequence is RN. Positions 271, 272, 277, 287, 293, 295, 297, and 333 each coordinate Ca(2+). 3 residues coordinate pyrroloquinoline quinone: Tyr367, Thr372, and Lys401. The tract at residues 430 to 432 is PQQ; the sequence is RYR.

Belongs to the PQQ oxidoreductase GdhB family. In terms of assembly, homodimer. It depends on pyrroloquinoline quinone as a cofactor. Ca(2+) is required as a cofactor.

It catalyses the reaction a ubiquinone + D-glucose = D-glucono-1,5-lactone + a ubiquinol. Functionally, oxidizes glucose to gluconolactone. The sequence is that of Quinoprotein glucose dehydrogenase B (gdhB) from Acinetobacter calcoaceticus.